Consider the following 325-residue polypeptide: GMP reductase (325 aa).

Catalysis depends on Cys174, which acts as the Thioimidate intermediate. 203–226 (MIADGGIRTHGDIAKSIRFGASMV) contacts NADP(+).

This sequence belongs to the IMPDH/GMPR family. GuaC type 2 subfamily.

The enzyme catalyses IMP + NH4(+) + NADP(+) = GMP + NADPH + 2 H(+). Catalyzes the irreversible NADPH-dependent deamination of GMP to IMP. It functions in the conversion of nucleobase, nucleoside and nucleotide derivatives of G to A nucleotides, and in maintaining the intracellular balance of A and G nucleotides. This Staphylococcus carnosus (strain TM300) protein is GMP reductase.